A 266-amino-acid polypeptide reads, in one-letter code: Stomatin homolog PH1511 (266 aa).

The helical transmembrane segment at 7–27 threads the bilayer; that stretch reads FFVTSIILLFILIFLASAIKI. Coiled coils occupy residues 125-152 and 178-213; these read GQAH…EATD and RQAE…ISEH.

This sequence belongs to the band 7/mec-2 family. In terms of assembly, homotrimer. Interacts with PH1510 and is cleaved by PH1510.

It localises to the membrane. This is Stomatin homolog PH1511 from Pyrococcus horikoshii (strain ATCC 700860 / DSM 12428 / JCM 9974 / NBRC 100139 / OT-3).